The primary structure comprises 23 residues: Major prohead-scaffolding core protein Gp22 (23 aa).

The segment at 1–23 (KAEEEVEKNKEEAEEKAEKKIAE) is disordered. The span at 7–23 (EKNKEEAEEKAEKKIAE) shows a compositional bias: basic and acidic residues.

Its function is as follows. Gp22 functions in head assembly. Functionally, internal peptide VII: Cleavage product of Gp22 that is incorporated into the mature phage head. In Enterobacteria phage T6 (Bacteriophage T6), this protein is Major prohead-scaffolding core protein Gp22 (22).